A 486-amino-acid chain; its full sequence is Probable peptidoglycan glycosyltransferase FtsW (486 aa).

At Met-1–Trp-50 the chain is on the cytoplasmic side. A helical membrane pass occupies residues Leu-51 to Ile-71. Over Glu-72–Pro-77 the chain is Periplasmic. The chain crosses the membrane as a helical span at residues Phe-78–Ala-98. Residues Met-99 to Met-112 are Cytoplasmic-facing. The helical transmembrane segment at Leu-113–Val-133 threads the bilayer. Residues Asn-134–Asn-141 lie on the Periplasmic side of the membrane. The helical transmembrane segment at Leu-142 to Ala-162 threads the bilayer. Residues Ser-163–Ala-174 are Cytoplasmic-facing. The chain crosses the membrane as a helical span at residues Thr-175 to Leu-195. Over Gln-196–Phe-199 the chain is Periplasmic. The helical transmembrane segment at Gly-200–Ile-220 threads the bilayer. At Gly-221–Arg-222 the chain is on the cytoplasmic side. The helical transmembrane segment at Ile-223–Tyr-243 threads the bilayer. At Arg-244–Asp-298 the chain is on the periplasmic side. A helical transmembrane segment spans residues Phe-299–Leu-319. Residues Tyr-320–Ser-342 lie on the Cytoplasmic side of the membrane. The chain crosses the membrane as a helical span at residues Gly-343 to Val-363. At Asn-364 to Thr-374 the chain is on the periplasmic side. The helical transmembrane segment at Leu-375–Leu-395 threads the bilayer. Residues Leu-396–Ala-486 are Cytoplasmic-facing.

Belongs to the SEDS family. FtsW subfamily.

It localises to the cell inner membrane. The catalysed reaction is [GlcNAc-(1-&gt;4)-Mur2Ac(oyl-L-Ala-gamma-D-Glu-L-Lys-D-Ala-D-Ala)](n)-di-trans,octa-cis-undecaprenyl diphosphate + beta-D-GlcNAc-(1-&gt;4)-Mur2Ac(oyl-L-Ala-gamma-D-Glu-L-Lys-D-Ala-D-Ala)-di-trans,octa-cis-undecaprenyl diphosphate = [GlcNAc-(1-&gt;4)-Mur2Ac(oyl-L-Ala-gamma-D-Glu-L-Lys-D-Ala-D-Ala)](n+1)-di-trans,octa-cis-undecaprenyl diphosphate + di-trans,octa-cis-undecaprenyl diphosphate + H(+). It participates in cell wall biogenesis; peptidoglycan biosynthesis. In terms of biological role, peptidoglycan polymerase that is essential for cell division. This chain is Probable peptidoglycan glycosyltransferase FtsW, found in Xanthomonas oryzae pv. oryzae (strain KACC10331 / KXO85).